The following is a 396-amino-acid chain: S-adenosylmethionine synthase (396 aa).

ATP is bound at residue H16. D18 is a binding site for Mg(2+). E44 is a binding site for K(+). E57 and Q100 together coordinate L-methionine. The flexible loop stretch occupies residues 100 to 110 (QSPDIAQGVDR). Residues 167–169 (DAK), 233–234 (RF), D242, 248–249 (RK), A265, and K269 each bind ATP. D242 provides a ligand contact to L-methionine. Position 273 (K273) interacts with L-methionine.

Belongs to the AdoMet synthase family. Homotetramer; dimer of dimers. The cofactor is Mg(2+). Requires K(+) as cofactor.

It is found in the cytoplasm. It carries out the reaction L-methionine + ATP + H2O = S-adenosyl-L-methionine + phosphate + diphosphate. It functions in the pathway amino-acid biosynthesis; S-adenosyl-L-methionine biosynthesis; S-adenosyl-L-methionine from L-methionine: step 1/1. Functionally, catalyzes the formation of S-adenosylmethionine (AdoMet) from methionine and ATP. The overall synthetic reaction is composed of two sequential steps, AdoMet formation and the subsequent tripolyphosphate hydrolysis which occurs prior to release of AdoMet from the enzyme. This Paraburkholderia xenovorans (strain LB400) protein is S-adenosylmethionine synthase.